Consider the following 65-residue polypeptide: Large ribosomal subunit protein bL33m (65 aa).

A mitochondrion-targeting transit peptide spans 1–8 (MLLSAVSF).

The protein belongs to the bacterial ribosomal protein bL33 family. In terms of assembly, component of the mitochondrial ribosome large subunit (39S) which comprises a 16S rRNA and about 50 distinct proteins.

The protein localises to the mitochondrion. This chain is Large ribosomal subunit protein bL33m (Mrpl33), found in Mus musculus (Mouse).